Here is a 454-residue protein sequence, read N- to C-terminus: tRNA modification GTPase MnmE (454 aa).

Residues arginine 23, glutamate 80, and lysine 120 each coordinate (6S)-5-formyl-5,6,7,8-tetrahydrofolate. The TrmE-type G domain occupies 216-377 (GMKVVIAGRP…LRNHLKQSMG (162 aa)). Residue asparagine 226 coordinates K(+). Residues 226-231 (NAGKSS), 245-251 (TDIAGTT), 270-273 (DTAG), 335-338 (NKAD), and 358-360 (SAR) each bind GTP. Serine 230 lines the Mg(2+) pocket. Residues threonine 245, isoleucine 247, and threonine 250 each coordinate K(+). Position 251 (threonine 251) interacts with Mg(2+). Position 454 (lysine 454) interacts with (6S)-5-formyl-5,6,7,8-tetrahydrofolate.

The protein belongs to the TRAFAC class TrmE-Era-EngA-EngB-Septin-like GTPase superfamily. TrmE GTPase family. Homodimer. Heterotetramer of two MnmE and two MnmG subunits. K(+) is required as a cofactor.

Its subcellular location is the cytoplasm. Its function is as follows. Exhibits a very high intrinsic GTPase hydrolysis rate. Involved in the addition of a carboxymethylaminomethyl (cmnm) group at the wobble position (U34) of certain tRNAs, forming tRNA-cmnm(5)s(2)U34. This Salmonella paratyphi C (strain RKS4594) protein is tRNA modification GTPase MnmE.